We begin with the raw amino-acid sequence, 518 residues long: Mitochondrial distribution and morphology protein 34 (518 aa).

The region spanning Met1–Leu198 is the SMP-LTD domain. 2 disordered regions span residues Ser335–Ser369 and Ile491–Val518. Residues Arg336–Ser350 are compositionally biased toward basic residues. Residues Pro492–Thr506 are compositionally biased toward basic and acidic residues.

This sequence belongs to the MDM34 family. As to quaternary structure, component of the ER-mitochondria encounter structure (ERMES) or MDM complex, composed of MMM1, MDM10, MDM12 and MDM34.

The protein localises to the mitochondrion outer membrane. In terms of biological role, component of the ERMES/MDM complex, which serves as a molecular tether to connect the endoplasmic reticulum (ER) and mitochondria. Components of this complex are involved in the control of mitochondrial shape and protein biogenesis, and function in nonvesicular lipid trafficking between the ER and mitochondria. MDM34 is required for the interaction of the ER-resident membrane protein MMM1 and the outer mitochondrial membrane-resident beta-barrel protein MDM10. This Meyerozyma guilliermondii (strain ATCC 6260 / CBS 566 / DSM 6381 / JCM 1539 / NBRC 10279 / NRRL Y-324) (Yeast) protein is Mitochondrial distribution and morphology protein 34.